The following is a 730-amino-acid chain: MTRRKKMVERVTELMDKPDRIRNIGIVAHIDHGKTTLSDNLLAGAGMISEELAGRQLFMDSDEEEQARGITIDASNVSMVHTYGGEEYLINMIDTPGHVDFGGDVTRAMRAVDGAVVVVDAVEGTMPQTETVLRQALKEGVRPVLFINKVDRLVNELKVDEQEMQIRLAKVIDKVNKLIKGMNEKMYNDGWKLDAAKGTVAFGSALYNWAVSVPFMKSSGVSFKDVFEKCNAGDMKWLSKNSPLHAVLLDMVVKHLPNPLQAQDRRIHIIWHGDYNTPEGKAMVACDPNGPVCMMVTDISFDPHAGEVATGRLFSGTLRRGTECYIIGAAKRANRLAQVGIFMGAERIEVEALPAGNIAAVTGLKDAIVGSTVTSLIEMTPFESLKHYSEPVMTVAVEAKSMKDLPKLVEVLRQIAKEDPTVQVSINEETGEHLISGMGELHLEIITGRIKRDKGVDILTSPPIVVYRETITGSVGPVEGKSPNRHNRFYIELEPMDPAIVKMILDGEISMNQQAIERRDALVAAGMDKDEAKNVKAIEATNMFIDMTKGIQYLNETMELVLDGWREALRGGPLADELVQNLKIRLVDVKLHEDAIHRGPAQVIPAVRSAVKAGVLMAGDSLLEPIQKIQITVPSEQMGAATSQIQGRRGQVFDMLSEGDTMTIVGKAPVAELFGFAGDIRSATEGRAMWSTEFAGFELVPAGIVNDVVKDIRKRKGLKEQIPRPDDYLA.

The tr-type G domain maps to Asp19 to Leu260. GTP is bound by residues Ala28 to Thr35, Asp94 to His98, and Asn148 to Asp151. His597 bears the Diphthamide mark.

The protein belongs to the TRAFAC class translation factor GTPase superfamily. Classic translation factor GTPase family. EF-G/EF-2 subfamily.

Its subcellular location is the cytoplasm. Functionally, catalyzes the GTP-dependent ribosomal translocation step during translation elongation. During this step, the ribosome changes from the pre-translocational (PRE) to the post-translocational (POST) state as the newly formed A-site-bound peptidyl-tRNA and P-site-bound deacylated tRNA move to the P and E sites, respectively. Catalyzes the coordinated movement of the two tRNA molecules, the mRNA and conformational changes in the ribosome. The sequence is that of Elongation factor 2 from Methanoculleus marisnigri (strain ATCC 35101 / DSM 1498 / JR1).